We begin with the raw amino-acid sequence, 160 residues long: MELPAVNLKVILLVHWLLTTWGCLAFSGSYAWGNFTILALGVWAVAQRDSVDAIGMFLGGLVATIFLDIIYISIFYSSVAVGDTGRFSAGMAIFSLLLKPFSCCLVYHMHRERGGELPLRSDFFGPSQEHSAYQTIDSSDSPADPLASLENKGQAAPRGY.

At 1 to 9 (MELPAVNLK) the chain is on the extracellular side. The chain crosses the membrane as a helical span at residues 10–30 (VILLVHWLLTTWGCLAFSGSY). Residues 31-53 (AWGNFTILALGVWAVAQRDSVDA) lie on the Cytoplasmic side of the membrane. Residues 54–74 (IGMFLGGLVATIFLDIIYISI) traverse the membrane as a helical segment. The Extracellular segment spans residues 75–86 (FYSSVAVGDTGR). A helical membrane pass occupies residues 87 to 107 (FSAGMAIFSLLLKPFSCCLVY). The Cytoplasmic segment spans residues 108–160 (HMHRERGGELPLRSDFFGPSQEHSAYQTIDSSDSPADPLASLENKGQAAPRGY). Residues 110 to 122 (HRERGGELPLRSD) are interaction with AGTR1. S127 carries the phosphoserine modification. A disordered region spans residues 128–160 (QEHSAYQTIDSSDSPADPLASLENKGQAAPRGY). T135 is subject to Phosphothreonine. The span at 137 to 149 (DSSDSPADPLASL) shows a compositional bias: low complexity. S138 is subject to Phosphoserine.

Interacts with RACK1, and with the carboxy-terminal region of AGTR1.

The protein localises to the endoplasmic reticulum membrane. It localises to the golgi apparatus membrane. It is found in the cytoplasmic vesicle membrane. Its function is as follows. Appears to be a negative regulator of type-1 angiotensin II receptor-mediated signaling by regulating receptor internalization as well as mechanism of receptor desensitization such as phosphorylation. May play a role of negative regulator in cardiomyocyte hypertrophy induced by angiotensin II through an inhibition of p38 mitogen-activated protein kinase pathway. Attenuates type-1 angiotensin II receptor growth promoting effect and angiotensin II-induced phosphorylation of protein kinase AKT and of STAT3. This chain is Type-1 angiotensin II receptor-associated protein (Agtrap), found in Rattus norvegicus (Rat).